The primary structure comprises 141 residues: Nucleoside diphosphate kinase (141 aa).

Residues Lys-11, Phe-59, Arg-87, Thr-93, Arg-104, and Asn-114 each coordinate ATP. The Pros-phosphohistidine intermediate role is filled by His-117.

It belongs to the NDK family. In terms of assembly, homotetramer. It depends on Mg(2+) as a cofactor.

It is found in the cytoplasm. It carries out the reaction a 2'-deoxyribonucleoside 5'-diphosphate + ATP = a 2'-deoxyribonucleoside 5'-triphosphate + ADP. It catalyses the reaction a ribonucleoside 5'-diphosphate + ATP = a ribonucleoside 5'-triphosphate + ADP. Major role in the synthesis of nucleoside triphosphates other than ATP. The ATP gamma phosphate is transferred to the NDP beta phosphate via a ping-pong mechanism, using a phosphorylated active-site intermediate. The protein is Nucleoside diphosphate kinase of Pseudomonas fluorescens (strain ATCC BAA-477 / NRRL B-23932 / Pf-5).